The sequence spans 515 residues: Iroquois-class homeodomain protein IRX-4 (515 aa).

The homeobox; TALE-type DNA-binding region spans 144–205 (GTRRKNATRE…NARRRLKKEN (62 aa)). Disordered regions lie at residues 205 to 258 (NKMT…ELEL), 278 to 307 (TPFQ…STTL), and 398 to 425 (GPTG…RHQD). Over residues 214–223 (KCADEKRPYG) the composition is skewed to basic and acidic residues. Residues 224-236 (EGEEEEAGEEESR) are compositionally biased toward acidic residues. Residues 237 to 257 (EEPLKSAKSEGHAGKDDKELE) show a composition bias toward basic and acidic residues. Low complexity predominate over residues 399-419 (PTGVSATTPASSPAVTAPSGA).

The protein belongs to the TALE/IRO homeobox family. Interacts with the vitamin D receptor VDR but doesn't affect its transactivation activity. Expressed in the developing central nervous system, skin, and vibrissae, but predominantly expressed in the cardiac ventricles of the developing heart. Not expressed in the developing metanephric kidney or adult kidney.

It is found in the nucleus. Its function is as follows. Likely to be an important mediator of ventricular differentiation during cardiac development. This Mus musculus (Mouse) protein is Iroquois-class homeodomain protein IRX-4 (Irx4).